The primary structure comprises 505 residues: Buccalin (505 aa).

An N-terminal signal peptide occupies residues 1–25 (MAHHRGHRHILLYVSLALSLGLALA). A propeptide spanning residues 26-62 (EDATDPSDDTGSFDDVEAVSEEADLDPYSMSQELNKR) is cleaved from the precursor. Valine amide is present on V74. A leucine amide mark is found at L88 and L102. Position 106 is a pyrrolidone carboxylic acid (Q106). I116 is modified (isoleucine amide). Leucine amide is present on residues L129, L143, L157, L171, L185, L199, L213, L227, L241, L254, L267, L281, L294, L307, L321, and L335. E349 is subject to Glutamic acid 1-amide. L363, L377, L391, L405, L419, and L433 each carry leucine amide. Isoleucine amide occurs at positions 447 and 461. Position 465 is a pyrrolidone carboxylic acid (Q465). Positions 472-505 (SGRLGKRSSSEQEEEDVRQVEKRSTTEEQSSKSL) are disordered. L475 bears the Leucine amide mark. A compositionally biased stretch (basic and acidic residues) spans 488–505 (VRQVEKRSTTEEQSSKSL). A propeptide spanning residues 495-505 (STTEEQSSKSL) is cleaved from the precursor.

Cholinergic motor neuron B15 innervating buccal muscles in Aplysia.

It is found in the secreted. Its function is as follows. Modulatory neuropeptide, acting presynaptically on nerve terminals to inhibit acetylcholine release. The sequence is that of Buccalin from Aplysia californica (California sea hare).